Consider the following 144-residue polypeptide: Large ribosomal subunit protein uL15 (144 aa).

Residues 1–10 are compositionally biased toward basic and acidic residues; the sequence is MKLHELKPAE. Residues 1 to 52 are disordered; sequence MKLHELKPAEGSRQVRNRVGRGTSSGNGKTAGRGQKGQKARGKVRLGFEGGQ. The span at 23-35 shows a compositional bias: gly residues; that stretch reads TSSGNGKTAGRGQ.

It belongs to the universal ribosomal protein uL15 family. Part of the 50S ribosomal subunit.

In terms of biological role, binds to the 23S rRNA. The chain is Large ribosomal subunit protein uL15 from Ligilactobacillus salivarius (strain UCC118) (Lactobacillus salivarius).